The primary structure comprises 464 residues: Glycine receptor subunit alpha-3 (464 aa).

The first 33 residues, 1–33 (MAHVRHFRTLLSGFYFWEAALLLSLVATKETNS), serve as a signal peptide directing secretion. The Extracellular portion of the chain corresponds to 34–255 (ARSRSAPMSP…RFHLERQMGY (222 aa)). N-linked (GlcNAc...) asparagine glycosylation is present at N71. An intrachain disulfide couples C171 to C185. Residues E225 and D227 each coordinate Zn(2+). C231 and C242 form a disulfide bridge. Residue 235-240 (YNTGKF) coordinates strychnine. H248 provides a ligand contact to Zn(2+). Residues 256–277 (YLIQMYIPSLLIVILSWVSFWI) traverse the membrane as a helical segment. At 278 to 282 (NMDAA) the chain is on the cytoplasmic side. The chain crosses the membrane as a helical span at residues 283–303 (PARVALGITTVLTMTTQSSGS). Residues 304 to 314 (RASLPKVSYVK) lie on the Extracellular side of the membrane. The chain crosses the membrane as a helical span at residues 315–335 (AIDIWMAVCLLFVFSALLEYA). The Cytoplasmic portion of the chain corresponds to 336-430 (AVNFVSRQHK…FIDRAKKIDT (95 aa)). S370 carries the post-translational modification Phosphoserine. S379 is modified (phosphoserine; by PKA). The chain crosses the membrane as a helical span at residues 431-451 (ISRACFPLAFLIFNIFYWVIY). Residues 452–464 (KILRHEDIHHQQD) lie on the Extracellular side of the membrane.

The protein belongs to the ligand-gated ion channel (TC 1.A.9) family. Glycine receptor (TC 1.A.9.3) subfamily. GLRA3 sub-subfamily. In terms of assembly, homopentamer (in vitro). Heteropentamer composed of GLRA3 and GLRB. Both homopentamers and heteropentamers form functional ion channels, but their characteristics are subtly different. Phosphorylated by PKA; this causes down-regulation of channel activity.

The protein resides in the postsynaptic cell membrane. It is found in the perikaryon. Its subcellular location is the cell projection. The protein localises to the dendrite. It localises to the synapse. The protein resides in the cell membrane. The enzyme catalyses chloride(in) = chloride(out). Its activity is regulated as follows. Low levels of Zn(2+) ions (1 uM) increase glycine sensitivity and decrease the glycine concentration required for half-maximal channel activity. Channel activity is strongly enhanced by ethanol. Inhibited by picrotoxin. Inhibited by prostaglandin E2, probably via PKA-mediated phosphorylation at Ser-379. Functionally, glycine receptors are ligand-gated chloride channels. Channel opening is triggered by extracellular glycine. Channel characteristics depend on the subunit composition; heteropentameric channels display faster channel closure. Plays an important role in the down-regulation of neuronal excitability. Contributes to the generation of inhibitory postsynaptic currents. Contributes to increased pain perception in response to increased prostaglandin E2 levels. Plays a role in cellular responses to ethanol. This Rattus norvegicus (Rat) protein is Glycine receptor subunit alpha-3 (Glra3).